Consider the following 366-residue polypeptide: tRNA-specific 2-thiouridylase MnmA (366 aa).

ATP-binding positions include 6-13 (AMSGGVDS) and Leu-32. The Nucleophile role is filled by Cys-101. A disulfide bridge links Cys-101 with Cys-198. Gly-125 lines the ATP pocket. The interaction with tRNA stretch occupies residues 148-150 (KDQ). Residue Cys-198 is the Cysteine persulfide intermediate of the active site.

Belongs to the MnmA/TRMU family.

It is found in the cytoplasm. The catalysed reaction is S-sulfanyl-L-cysteinyl-[protein] + uridine(34) in tRNA + AH2 + ATP = 2-thiouridine(34) in tRNA + L-cysteinyl-[protein] + A + AMP + diphosphate + H(+). Its function is as follows. Catalyzes the 2-thiolation of uridine at the wobble position (U34) of tRNA, leading to the formation of s(2)U34. The protein is tRNA-specific 2-thiouridylase MnmA of Nocardioides sp. (strain ATCC BAA-499 / JS614).